Consider the following 361-residue polypeptide: Cytochrome c peroxidase, mitochondrial (361 aa).

The transit peptide at 1–67 (MTTAVRLLPS…NWGKAAALAS (67 aa)) directs the protein to the mitochondrion. H119 functions as the Proton acceptor in the catalytic mechanism. Phosphotyrosine is present on Y220. Position 242 (H242) interacts with heme b. Residue W258 is the Tryptophan radical intermediate of the active site.

This sequence belongs to the peroxidase family. Cytochrome c peroxidase subfamily. Forms a one-to-one complex with cytochrome c. It depends on heme b as a cofactor. Post-translationally, CCP1 precursor is processed by the rhomboid protease PCP1, which cleaves the N-terminal hydrophobic transit peptide. The m-AAA protease (composed of YTA12/RCA1 and YTA10/AFG3) is required for CCP1 maturation: m-AAA protease promotes membrane dislocation of the CCP1 transmembrane segment within the transit peptide to ensure the correct positioning of CCP1 within the membrane bilayer, allowing intramembrane cleavage by PCP1.

Its subcellular location is the mitochondrion matrix. It localises to the mitochondrion intermembrane space. It catalyses the reaction 2 Fe(II)-[cytochrome c] + H2O2 + 2 H(+) = 2 Fe(III)-[cytochrome c] + 2 H2O. Functionally, destroys radicals which are normally produced within the cells and which are toxic to biological systems. The polypeptide is Cytochrome c peroxidase, mitochondrial (CCP1) (Saccharomyces cerevisiae (strain ATCC 204508 / S288c) (Baker's yeast)).